The following is a 747-amino-acid chain: Cysteine--tRNA ligase, cytoplasmic (747 aa).

Residues 1–26 (MTESWEQGKGRRTQPPWSAPNTNEQP) form a disordered region. Residues 15 to 25 (PPWSAPNTNEQ) are compositionally biased toward polar residues. Zn(2+) is bound at residue cysteine 54. Glycine 55 serves as a coordination point for L-cysteine. Residues 56–66 (PTVYDASHMGH) carry the 'HIGH' region motif. Threonine 95 is an L-cysteine binding site. The 'KIIK' region motif lies at 100–103 (KIIK). Zn(2+) is bound by residues cysteine 347, histidine 372, and glutamate 376. Residue histidine 372 participates in L-cysteine binding. The 'KMSKS' region motif lies at 405 to 409 (KMSKS). Lysine 408 serves as a coordination point for ATP. Residues 651-683 (EEKRKAEEEKQRKKEEAARKKQQQEAAKLEKMK) show a composition bias toward basic and acidic residues. Disordered regions lie at residues 651-685 (EEKRKAEEEKQRKKEEAARKKQQQEAAKLEKMKIS) and 700-721 (FDESGFPTHDTEGKELSKGQTK).

The protein belongs to the class-I aminoacyl-tRNA synthetase family. As to quaternary structure, homodimer. Zn(2+) serves as cofactor.

The protein localises to the cytoplasm. The catalysed reaction is tRNA(Cys) + L-cysteine + ATP = L-cysteinyl-tRNA(Cys) + AMP + diphosphate. Its function is as follows. Catalyzes the ATP-dependent ligation of cysteine to tRNA(Cys). This Xenopus laevis (African clawed frog) protein is Cysteine--tRNA ligase, cytoplasmic (cars1).